Reading from the N-terminus, the 159-residue chain is 2-C-methyl-D-erythritol 2,4-cyclodiphosphate synthase (159 aa).

Residues Asp9 and His11 each coordinate a divalent metal cation. Residues 9 to 11 and 35 to 36 each bind 4-CDP-2-C-methyl-D-erythritol 2-phosphate; these read DVH and HS. His43 serves as a coordination point for a divalent metal cation. Residues 57–59, 62–66, 133–136, Phe140, and Arg143 contribute to the 4-CDP-2-C-methyl-D-erythritol 2-phosphate site; these read DIG, FPDTD, and TTTE.

The protein belongs to the IspF family. In terms of assembly, homotrimer. A divalent metal cation serves as cofactor.

It carries out the reaction 4-CDP-2-C-methyl-D-erythritol 2-phosphate = 2-C-methyl-D-erythritol 2,4-cyclic diphosphate + CMP. It functions in the pathway isoprenoid biosynthesis; isopentenyl diphosphate biosynthesis via DXP pathway; isopentenyl diphosphate from 1-deoxy-D-xylulose 5-phosphate: step 4/6. Involved in the biosynthesis of isopentenyl diphosphate (IPP) and dimethylallyl diphosphate (DMAPP), two major building blocks of isoprenoid compounds. Catalyzes the conversion of 4-diphosphocytidyl-2-C-methyl-D-erythritol 2-phosphate (CDP-ME2P) to 2-C-methyl-D-erythritol 2,4-cyclodiphosphate (ME-CPP) with a corresponding release of cytidine 5-monophosphate (CMP). The sequence is that of 2-C-methyl-D-erythritol 2,4-cyclodiphosphate synthase from Mannheimia succiniciproducens (strain KCTC 0769BP / MBEL55E).